A 2167-amino-acid chain; its full sequence is SH3 and multiple ankyrin repeat domains protein 1 (2167 aa).

The tract at residues 1–63 (MTHSPATSED…TRGLQGRSMS (63 aa)) is disordered. Residues 17–32 (SECPEGGSESDSSPDG) show a composition bias toward low complexity. The span at 33 to 47 (PGRGPQGTRGRGSGA) shows a compositional bias: gly residues. At Arg43 the chain carries Omega-N-methylarginine. Position 186 is a phosphotyrosine (Tyr186). 6 ANK repeats span residues 212–242 (SGET…HIDF), 246–275 (DGMT…SPNY), 279–309 (RGLT…QLGI), 313–342 (NGWQ…EPGA), 346–375 (SGNT…NKDV), and 379–407 (NGQT…EQDV). Disordered regions lie at residues 413–432 (SPKY…TVPP) and 454–546 (PGAS…SRGR). Residues 454–479 (PGASSSGTPGPTSGSQGQSQPSAPST) are compositionally biased toward low complexity. A compositionally biased stretch (gly residues) spans 527–542 (PAGGTGGSGGPGGSLG). The residue at position 540 (Ser540) is a Phosphoserine. Omega-N-methylarginine is present on Arg544. The SH3 domain occupies 554 to 613 (VPGRSFMAVKSYQAQGEGEISLSKGEKIKVLSIGEGGFWEGQVKGRVGWFPSDCLEEVAN). Positions 663 to 757 (TVLLQKKDSE…TLMVKVVMVT (95 aa)) constitute a PDZ domain. Residues Ser671 and Ser791 each carry the phosphoserine modification. The segment at 841–894 (ISASESPGPGGLASLGKHRPKGFFATESSFDPHHRSQPSYDRPSFLPPGPGLML) is disordered. Ser898 is subject to Phosphoserine. Disordered stretches follow at residues 917-1233 (SRSL…LDFT) and 1245-1290 (RREG…RHSK). Residues 928 to 947 (IPPPPTTSPPEPPYSTPPAP) are compositionally biased toward pro residues. Omega-N-methylarginine is present on Arg958. Over residues 969 to 980 (PLPASSPSSFDG) the composition is skewed to low complexity. The segment covering 1004-1028 (AHHHPPHHHHHHAPPPQPHHHHAHP) has biased composition (basic residues). The residue at position 1059 (Arg1059) is an Omega-N-methylarginine. Residues 1064–1089 (SPTSGAPSPSHHSSSGGSSGPAQAPA) show a composition bias toward low complexity. Omega-N-methylarginine is present on residues Arg1098 and Arg1109. 2 stretches are compositionally biased toward low complexity: residues 1132 to 1146 (SLPP…ALPR) and 1171 to 1184 (STSS…GSST). The segment covering 1203–1224 (SPAPATSPVPPSPSPVPTPASP) has biased composition (pro residues). Over residues 1245 to 1256 (RREGGWQNEARR) the composition is skewed to basic and acidic residues. Arg1257 is modified (asymmetric dimethylarginine). The residue at position 1291 (Ser1291) is a Phosphoserine. Disordered regions lie at residues 1308 to 1331 (GGSS…GSSS), 1361 to 1417 (LAAR…VLRL), 1429 to 1458 (RAGL…PPTA), 1500 to 1725 (FLEN…AGVA), 1740 to 1790 (GQAF…TPTS), 1828 to 1866 (VPPV…QPQA), 1898 to 1988 (PWAR…STRH), and 2002 to 2029 (RRAP…LPIL). Basic and acidic residues predominate over residues 1363–1372 (ARERALKESS). Residues 1378–1395 (PQPPPRPPSPRYDAPPPT) are compositionally biased toward pro residues. Residues 1396–1408 (LHHHSPHSPHSPH) are compositionally biased toward basic residues. Residue Arg1429 is modified to Omega-N-methylarginine. Ser1442 carries the post-translational modification Phosphoserine. Residues 1530–1541 (RRVLPTSPTSPR) show a composition bias toward low complexity. The span at 1589-1615 (PLTPGPPHPLPDPPSPATPLPAAPPPA) shows a compositional bias: pro residues. Over residues 1624–1641 (DSTASSLTSYDSEVATLT) the composition is skewed to polar residues. Residues 1648–1676 (PGDPPAPGPPAPAAPAPPAPQPGPDPPPG) show a composition bias toward pro residues. Residues 1684-1694 (VDSRSSSDHPL) show a composition bias toward basic and acidic residues. Residues 1695-1708 (ETISSASTLSSLSA) are compositionally biased toward low complexity. A compositionally biased stretch (gly residues) spans 1709–1724 (EGGGNTGGVAGGGAGV). Pro residues predominate over residues 1850-1861 (PGPPPPPLPGPL). Omega-N-methylarginine is present on Arg1901. 3 stretches are compositionally biased toward low complexity: residues 1934 to 1945 (SQTSLLSKPSSS), 1960 to 1985 (TGSG…ASAS), and 2002 to 2012 (RRAPSPSLLPA). Omega-N-methylarginine occurs at positions 2022, 2042, and 2080. An SAM domain is found at 2104–2167 (WTKFDVADWL…DRALKFFLER (64 aa)).

This sequence belongs to the SHANK family. As to quaternary structure, may homomultimerize via its SAM domain. Interacts with the C-terminus of SSTR2 via the PDZ domain. Interacts with SHARPIN, SPTAN1, HOMER1 and DLGAP1/GKAP. Part of a complex with DLG4/PSD-95 and DLGAP1/GKAP. Interacts with BAIAP2. Interacts with IGSF9. Interacts with HOMER1 and HOMER3. In terms of tissue distribution, in brain, highly expressed in cortex, hippocampus and cerebellum.

It localises to the cytoplasm. It is found in the synapse. The protein resides in the postsynaptic density. In terms of biological role, seems to be an adapter protein in the postsynaptic density (PSD) of excitatory synapses that interconnects receptors of the postsynaptic membrane including NMDA-type and metabotropic glutamate receptors, and the actin-based cytoskeleton. Plays a role in the structural and functional organization of the dendritic spine and synaptic junction. Overexpression promotes maturation of dendritic spines and the enlargement of spine heads via its ability to recruit Homer to postsynaptic sites, and enhances presynaptic function. The chain is SH3 and multiple ankyrin repeat domains protein 1 (Shank1) from Mus musculus (Mouse).